Here is a 479-residue protein sequence, read N- to C-terminus: Aspartyl/glutamyl-tRNA(Asn/Gln) amidotransferase subunit B (479 aa).

Belongs to the GatB/GatE family. GatB subfamily. As to quaternary structure, heterotrimer of A, B and C subunits.

The enzyme catalyses L-glutamyl-tRNA(Gln) + L-glutamine + ATP + H2O = L-glutaminyl-tRNA(Gln) + L-glutamate + ADP + phosphate + H(+). It catalyses the reaction L-aspartyl-tRNA(Asn) + L-glutamine + ATP + H2O = L-asparaginyl-tRNA(Asn) + L-glutamate + ADP + phosphate + 2 H(+). Its function is as follows. Allows the formation of correctly charged Asn-tRNA(Asn) or Gln-tRNA(Gln) through the transamidation of misacylated Asp-tRNA(Asn) or Glu-tRNA(Gln) in organisms which lack either or both of asparaginyl-tRNA or glutaminyl-tRNA synthetases. The reaction takes place in the presence of glutamine and ATP through an activated phospho-Asp-tRNA(Asn) or phospho-Glu-tRNA(Gln). This chain is Aspartyl/glutamyl-tRNA(Asn/Gln) amidotransferase subunit B, found in Streptococcus pyogenes serotype M5 (strain Manfredo).